Here is a 1413-residue protein sequence, read N- to C-terminus: DNA-directed RNA polymerase subunit beta' (1413 aa).

Positions 70, 72, 85, and 88 each coordinate Zn(2+). Mg(2+) is bound by residues Asp-461, Asp-463, and Asp-465. The Zn(2+) site is built by Cys-820, Cys-894, Cys-901, and Cys-904.

Belongs to the RNA polymerase beta' chain family. In terms of assembly, the RNAP catalytic core consists of 2 alpha, 1 beta, 1 beta' and 1 omega subunit. When a sigma factor is associated with the core the holoenzyme is formed, which can initiate transcription. Mg(2+) serves as cofactor. Zn(2+) is required as a cofactor.

The catalysed reaction is RNA(n) + a ribonucleoside 5'-triphosphate = RNA(n+1) + diphosphate. Its function is as follows. DNA-dependent RNA polymerase catalyzes the transcription of DNA into RNA using the four ribonucleoside triphosphates as substrates. The chain is DNA-directed RNA polymerase subunit beta' from Cupriavidus metallidurans (strain ATCC 43123 / DSM 2839 / NBRC 102507 / CH34) (Ralstonia metallidurans).